The sequence spans 616 residues: Dihydroxy-acid dehydratase (616 aa).

Asp-81 serves as a coordination point for Mg(2+). A [2Fe-2S] cluster-binding site is contributed by Cys-122. Mg(2+) is bound by residues Asp-123 and Lys-124. Lys-124 is subject to N6-carboxylysine. Cys-195 is a binding site for [2Fe-2S] cluster. A Mg(2+)-binding site is contributed by Glu-491. Ser-517 acts as the Proton acceptor in catalysis.

This sequence belongs to the IlvD/Edd family. Homodimer. [2Fe-2S] cluster is required as a cofactor. The cofactor is Mg(2+).

The enzyme catalyses (2R)-2,3-dihydroxy-3-methylbutanoate = 3-methyl-2-oxobutanoate + H2O. It catalyses the reaction (2R,3R)-2,3-dihydroxy-3-methylpentanoate = (S)-3-methyl-2-oxopentanoate + H2O. The protein operates within amino-acid biosynthesis; L-isoleucine biosynthesis; L-isoleucine from 2-oxobutanoate: step 3/4. It functions in the pathway amino-acid biosynthesis; L-valine biosynthesis; L-valine from pyruvate: step 3/4. In terms of biological role, functions in the biosynthesis of branched-chain amino acids. Catalyzes the dehydration of (2R,3R)-2,3-dihydroxy-3-methylpentanoate (2,3-dihydroxy-3-methylvalerate) into 2-oxo-3-methylpentanoate (2-oxo-3-methylvalerate) and of (2R)-2,3-dihydroxy-3-methylbutanoate (2,3-dihydroxyisovalerate) into 2-oxo-3-methylbutanoate (2-oxoisovalerate), the penultimate precursor to L-isoleucine and L-valine, respectively. This is Dihydroxy-acid dehydratase from Sodalis glossinidius (strain morsitans).